The primary structure comprises 764 residues: Nucleolar transcription factor 1 (764 aa).

Met1 is modified (N-acetylmethionine). Positions 1-21 (MNGEADCPTDLEMAAPKGQDR) are disordered. 2 consecutive DNA-binding regions (HMG box) follow at residues 112 to 180 (PKKP…ARFR) and 196 to 264 (PEKP…RDYI). The residue at position 201 (Thr201) is a Phosphothreonine. Residues Ser273, Ser336, and Ser364 each carry the phosphoserine modification. Residues 298-362 (TKPPPNSYSL…DYEVELLRFL (65 aa)) constitute a DNA-binding region (HMG box 3). Basic and acidic residues predominate over residues 370–379 (QQRVLGEEKM). The segment at 370 to 411 (QQRVLGEEKMLNINKKQTTSPASKKPSQEGGKGGSEKPKRPV) is disordered. Ser389, Ser412, Ser433, Ser435, Ser484, Ser495, Ser546, Ser584, and Ser638 each carry phosphoserine. 3 DNA-binding regions (HMG box) span residues 407–475 (PKRP…GGER), 482–549 (PESP…SEMR), and 568–634 (KKPP…DLWV). Residues 456 to 488 (YKAREAALKAQSERKPGGEREDRGKLPESPKRA) form a disordered region. Residues 457 to 488 (KAREAALKAQSERKPGGEREDRGKLPESPKRA) show a composition bias toward basic and acidic residues. Positions 546 to 576 (SEMRAPPAATNSSKKMKFQGEPKKPPMNGYQ) are disordered. The disordered stretch occupies residues 648-764 (YISNKRKNMT…SGDSSDSDSN (117 aa)). The segment covering 664 to 674 (PKSSRTTLQSK) has biased composition (polar residues). Positions 677–745 (SEEDDDEEDD…DDDEDEDNES (69 aa)) are enriched in acidic residues. Over residues 746–758 (EGSSSSSSSSGDS) the composition is skewed to low complexity.

Homodimer. Part of Pol I pre-initiation complex (PIC), in which Pol I core assembles with RRN3 and promoter-bound UTBF and SL1/TIF-IB complex. Interacts with TOP2A in the context of Pol I complex. Interacts with TBP. Interacts with TAF1A. Interacts with PHF6. Interacts with CEBPA (isoform 1 and isoform 4). Interacts with DDX11. Interacts with NOP53. Interacts with RASL11A. Interacts with DHX33. Binds to IRS1 and PIK3CA. Interacts with ALKBH2. In terms of processing, phosphorylated and activated by PIK3CA.

It is found in the nucleus. It localises to the nucleolus. Its function is as follows. Recognizes the ribosomal RNA gene promoter and activates transcription mediated by RNA polymerase I through cooperative interactions with the transcription factor SL1/TIF-IB complex. It binds specifically to the upstream control element. The sequence is that of Nucleolar transcription factor 1 (Ubtf) from Rattus norvegicus (Rat).